The primary structure comprises 692 residues: Protein artemis (692 aa).

At T380 the chain carries Phosphothreonine. S385 is subject to Phosphoserine. 2 disordered regions span residues 504–555 (LENF…DSQS) and 640–664 (STNADSQSSSDFEVPSTPEAELPKR). Positions 506-520 (NFPSSTVAGGSQSPK) are enriched in polar residues. Low complexity predominate over residues 530–543 (THISSQNSSQSTHI). Polar residues-rich tracts occupy residues 544 to 555 (TEQGSQGWDSQS) and 640 to 650 (STNADSQSSSD). Residue S645 is modified to Phosphoserine; by ATM.

It belongs to the DNA repair metallo-beta-lactamase (DRMBL) family. As to quaternary structure, interacts with LIG4; the interaction is direct. Interacts with ATM. Interacts with BRCA1. Interacts with PRKDC. Interacts with TP53BP1. Also exhibits ATM- and phosphorylation-dependent interaction with the MRN complex, composed of MRE11, RAD50, and NBN. Phosphorylation on undefined residues by PRKDC may stimulate endonucleolytic activity on 5' and 3' hairpins and overhangs. PRKDC must remain present, even after phosphorylation, for efficient hairpin opening. Also phosphorylated by ATM in response to ionizing radiation (IR) and by ATR in response to ultraviolet (UV) radiation. In terms of tissue distribution, ubiquitously expressed, with highest levels in the kidney, lung, pancreas and placenta (at the mRNA level). Expression is not increased in thymus or bone marrow, sites of V(D)J recombination.

It is found in the nucleus. Functionally, nuclease involved in DNA non-homologous end joining (NHEJ); required for double-strand break repair and V(D)J recombination. Required for V(D)J recombination, the process by which exons encoding the antigen-binding domains of immunoglobulins and T-cell receptor proteins are assembled from individual V, (D), and J gene segments. V(D)J recombination is initiated by the lymphoid specific RAG endonuclease complex, which generates site specific DNA double strand breaks (DSBs). These DSBs present two types of DNA end structures: hairpin sealed coding ends and phosphorylated blunt signal ends. These ends are independently repaired by the non homologous end joining (NHEJ) pathway to form coding and signal joints respectively. This protein exhibits single-strand specific 5'-3' exonuclease activity in isolation and acquires endonucleolytic activity on 5' and 3' hairpins and overhangs when in a complex with PRKDC. The latter activity is required specifically for the resolution of closed hairpins prior to the formation of the coding joint. Also required for the repair of complex DSBs induced by ionizing radiation, which require substantial end-processing prior to religation by NHEJ. The polypeptide is Protein artemis (Homo sapiens (Human)).